Reading from the N-terminus, the 492-residue chain is Catalase isozyme C (492 aa).

Arginine 62 contacts heme. The active site involves histidine 65. Arginine 102 lines the heme pocket. Asparagine 138 is a catalytic residue. Heme is bound at residue phenylalanine 151. Tyrosine 210 carries the phosphotyrosine; by STRK1 modification. Positions 325-348 form a cross-link, 3-(S-cysteinyl)-tyrosine (Cys-Tyr); the sequence is CPGIIVPGIYYSDDKLLQTRIFSY. Residues arginine 344, tyrosine 348, and arginine 355 each contribute to the heme site. Positions 484–492 match the Peroxisome targeting signal motif; it reads SRLSAKPSM.

It belongs to the catalase family. In terms of assembly, homotetramer. Interacts with GLO1 and GLO4; these interactions are disturbed by alpha-hydroxy-2-pyridinemethanesulfonic acid (HPMS) and salicylic acid (SA). Interacts with STRK1 at the plasma membrane. Requires heme as cofactor. In terms of processing, activated by STRK1-mediated phosphorylation at Tyr-210 upon salt and oxidative stress. In terms of tissue distribution, highly expressed in mature leaves. Mainly expressed in leaf blades, stems, panicles, leaf sheaths, and culms, but barely in roots.

The protein resides in the peroxisome. Its subcellular location is the glyoxysome. The protein localises to the cell membrane. It carries out the reaction 2 H2O2 = O2 + 2 H2O. With respect to regulation, strongly inhibited by beta-mercaptoethanol, sodium azide and potassium cyanide. Slightly repressed by 3-amino-1,2,4-triazole (3-AT). Activity is repressed proportionally to increased concentration of NaCl, KCl, LiCl and MgCl(2). Its function is as follows. Occurs in almost all aerobically respiring organisms and serves to protect cells from the toxic effects of hydrogen peroxide. Responsible for the redox homeostasis in leaves. Prevents nitric oxide (NO) accumulation and subsequent NO-mediated leaf cell death as well as the S-nitrosylation of specific proteins (e.g. glyceraldehyde 3-phosphate dehydrogenase and thioredoxin) by degrading H(2)O(2). Involved in photorespiration. Promotes drought stress tolerance and recovery. Involved in NO-mediated enhanced tolerance to zinc oxide nanoparticles (ZnO NPs)-induced phytotoxicity. Participates in melatonin-mediated detoxification. The sequence is that of Catalase isozyme C from Oryza sativa subsp. japonica (Rice).